A 316-amino-acid polypeptide reads, in one-letter code: Acetyl-coenzyme A carboxylase carboxyl transferase subunit beta, chloroplastic (316 aa).

Residues 47-316 (LWTRCDNCEN…CKKFQNSFFK (270 aa)) form the CoA carboxyltransferase N-terminal domain. The Zn(2+) site is built by cysteine 51, cysteine 54, cysteine 70, and cysteine 73. The C4-type zinc finger occupies 51 to 73 (CDNCENMLYVRFLRQNKRICEEC).

Belongs to the AccD/PCCB family. Acetyl-CoA carboxylase is a heterohexamer composed of biotin carboxyl carrier protein, biotin carboxylase and 2 subunits each of ACCase subunit alpha and ACCase plastid-coded subunit beta (accD). Zn(2+) is required as a cofactor.

It is found in the plastid. The protein localises to the chloroplast stroma. It catalyses the reaction N(6)-carboxybiotinyl-L-lysyl-[protein] + acetyl-CoA = N(6)-biotinyl-L-lysyl-[protein] + malonyl-CoA. The protein operates within lipid metabolism; malonyl-CoA biosynthesis; malonyl-CoA from acetyl-CoA: step 1/1. Functionally, component of the acetyl coenzyme A carboxylase (ACC) complex. Biotin carboxylase (BC) catalyzes the carboxylation of biotin on its carrier protein (BCCP) and then the CO(2) group is transferred by the transcarboxylase to acetyl-CoA to form malonyl-CoA. This Marchantia polymorpha (Common liverwort) protein is Acetyl-coenzyme A carboxylase carboxyl transferase subunit beta, chloroplastic.